The following is a 109-amino-acid chain: Putative double-stranded DNA mimic protein YciU (109 aa).

It belongs to the putative dsDNA mimic protein family.

In terms of biological role, may act as a double-stranded DNA (dsDNA) mimic. Probably regulates the activity of a dsDNA-binding protein. This is Putative double-stranded DNA mimic protein YciU from Salmonella choleraesuis (strain SC-B67).